Reading from the N-terminus, the 488-residue chain is Altronate oxidoreductase (488 aa).

18 to 29 (VIQFGEGNFLRA) is an NAD(+) binding site.

The protein belongs to the mannitol dehydrogenase family. UxaB subfamily.

It catalyses the reaction D-altronate + NAD(+) = keto-D-tagaturonate + NADH + H(+). It functions in the pathway carbohydrate metabolism; pentose and glucuronate interconversion. This is Altronate oxidoreductase from Pectobacterium carotovorum subsp. carotovorum (strain PC1).